The chain runs to 564 residues: MSESFKVCFCCSRSFKEKTRQPPVSIKRLFEAYSRNGKMSFDELLRFVSEVQGERHAGLDYVQDIFHSVKHHNVFHHHGLVHLNAFYRYLFSDTNSPLPMSGQVHHDMKAPLSHYFVYTGHNSYLTGNQVNSRSSVEPIVQALRKGVKVIELDLWPNPSGNAAEVRHGRTLTSHEDLQKCLTAIKDNAFHVSDYPVIITLEDHLPPKLQAQVAKMLTKTYRGMLFRRVSESFKHFPSPEELKGKILISTKPPKEYLESKTVHTTRTPTVKETSWNRVANKILEEYKDMESEAVGYRDLIAIHAANCKDPSKDCLSDDPEKPIRVSMDEQWLDTMVRTRGTDLVRFTQRNLVRIYPKGTRVDSSNYDPHVGWTHGAQMVAFNMQGHGKQLWIMQGMFRGNGGCGYVKKPRILLDEHTLFDPCKRFPIKTTLKVKIYTGEGWDLDFHHTHFDQYSPPDFFVKIGIAGVPRDTVSYRTETAVDQWFPIWGNDEFLFQLSVPELALLWFKVQDYDNDTQNDFAGQTCLPLPELKSGVRAVRLHDRTGKAYKNTRLLVSFALDPPYTFR.

The EF-hand domain occupies 19–54 (TRQPPVSIKRLFEAYSRNGKMSFDELLRFVSEVQGE). The region spanning 106–250 (HDMKAPLSHY…LKGKILISTK (145 aa)) is the PI-PLC X-box domain. Residues H121 and H167 contribute to the active site. The 117-residue stretch at 296-412 (RDLIAIHAAN…GYVKKPRILL (117 aa)) folds into the PI-PLC Y-box domain. The region spanning 406-539 (KKPRILLDEH…KSGVRAVRLH (134 aa)) is the C2 domain. Residues D450, D456, D509, D511, and D517 each contribute to the Ca(2+) site.

It depends on Ca(2+) as a cofactor. In terms of tissue distribution, expressed in leaves, roots and siliques, but not in flowers.

It is found in the cell membrane. The catalysed reaction is a 1,2-diacyl-sn-glycero-3-phospho-(1D-myo-inositol-4,5-bisphosphate) + H2O = 1D-myo-inositol 1,4,5-trisphosphate + a 1,2-diacyl-sn-glycerol + H(+). In terms of biological role, the production of the second messenger molecules diacylglycerol (DAG) and inositol 1,4,5-trisphosphate (IP3) is mediated by activated phosphatidylinositol-specific phospholipase C enzymes. This Arabidopsis thaliana (Mouse-ear cress) protein is Phosphoinositide phospholipase C 3 (PLC3).